The following is a 282-amino-acid chain: MDQRNKTLRDLPWEGERLSFFHDLVEYSFLRTAFVGGILVASLSGLVSPIVVFRRMEFIGDGTAHAVFAGLAAATLIGADHRLIAFATALLFAFAVSLFSRSRISESSAIGILLPFFMAVGVVLFSVSGRYQTDVMGYLFGDVLLVNSTDVAITAVVLALSVILTVVFRWDIKYFIVDEKMARFYGIKTDLIRFLITSFIAITVVTTVKVVGVILTGALLILPGLVSKIFGKSFWSLTTISVIFSTGVFFAGFLTAYTLDLPPGPVIVIIAFVSFLPMLKFS.

9 helical membrane passes run 33-53 (AFVG…IVVF), 58-78 (FIGD…TLIG), 79-99 (ADHR…VSLF), 109-129 (AIGI…SVSG), 148-168 (STDV…TVVF), 184-204 (FYGI…AITV), 210-230 (VVGV…SKIF), 234-254 (FWSL…AGFL), and 259-279 (LDLP…LPML).

This sequence belongs to the ABC-3 integral membrane protein family.

Its subcellular location is the cell inner membrane. Part of an ATP-driven transport system TM_0123/TM_0124/TM_0125 for a metal. The sequence is that of Probable metal transport system membrane protein TM_0125 from Thermotoga maritima (strain ATCC 43589 / DSM 3109 / JCM 10099 / NBRC 100826 / MSB8).